The sequence spans 506 residues: Maturase K (506 aa).

This sequence belongs to the intron maturase 2 family. MatK subfamily.

Its subcellular location is the plastid. It is found in the chloroplast. Usually encoded in the trnK tRNA gene intron. Probably assists in splicing its own and other chloroplast group II introns. The polypeptide is Maturase K (Hydrangea macrophylla (Bigleaf hydrangea)).